The primary structure comprises 258 residues: Imidazole glycerol phosphate synthase subunit HisF (258 aa).

Catalysis depends on residues Asp-11 and Asp-130.

The protein belongs to the HisA/HisF family. In terms of assembly, heterodimer of HisH and HisF.

It is found in the cytoplasm. It catalyses the reaction 5-[(5-phospho-1-deoxy-D-ribulos-1-ylimino)methylamino]-1-(5-phospho-beta-D-ribosyl)imidazole-4-carboxamide + L-glutamine = D-erythro-1-(imidazol-4-yl)glycerol 3-phosphate + 5-amino-1-(5-phospho-beta-D-ribosyl)imidazole-4-carboxamide + L-glutamate + H(+). The protein operates within amino-acid biosynthesis; L-histidine biosynthesis; L-histidine from 5-phospho-alpha-D-ribose 1-diphosphate: step 5/9. IGPS catalyzes the conversion of PRFAR and glutamine to IGP, AICAR and glutamate. The HisF subunit catalyzes the cyclization activity that produces IGP and AICAR from PRFAR using the ammonia provided by the HisH subunit. In Edwardsiella ictaluri (strain 93-146), this protein is Imidazole glycerol phosphate synthase subunit HisF.